Consider the following 192-residue polypeptide: ER membrane protein complex subunit 8/9 homolog (192 aa).

The MPN domain occupies 5–135 (ISITTEALSK…LVSIDKVGSD (131 aa)).

This sequence belongs to the EMC8/EMC9 family.

This is ER membrane protein complex subunit 8/9 homolog from Dictyostelium discoideum (Social amoeba).